Here is a 222-residue protein sequence, read N- to C-terminus: Methionine import system permease protein MetP (222 aa).

In terms of domain architecture, ABC transmembrane type-1 spans 18 to 212; sequence TYETLYMTLI…IIVFIIQIIG (195 aa). A run of 5 helical transmembrane segments spans residues 25 to 45, 73 to 93, 97 to 117, 152 to 172, and 195 to 215; these read TLIS…LLFL, FLIL…TILG, ALPA…EIAL, ISGI…AGAI, and FVAT…GDLI.

It belongs to the binding-protein-dependent transport system permease family. CysTW subfamily. As to quaternary structure, the complex is composed of two ATP-binding proteins (MetN), two transmembrane proteins (MetP) and a solute-binding protein (MetQ).

It is found in the cell membrane. Its function is as follows. Part of the ABC transporter complex MetNPQ involved in methionine import. Responsible for the translocation of the substrate across the membrane. It has also been shown to be involved in methionine sulfoxide transport. The chain is Methionine import system permease protein MetP (metP) from Bacillus subtilis (strain 168).